The sequence spans 219 residues: Probable transcription factor At1g55950 (219 aa).

A disordered region spans residues 9 to 77 (ASHSLKSLMA…DEKMETEEEG (69 aa)). Over residues 17-30 (MAKKNKRSQQKNKC) the composition is skewed to basic residues. Residues 31-48 (LKPEKDPSTVKRLLEDPP) show a composition bias toward basic and acidic residues. Residues 65–77 (YGDDEKMETEEEG) are compositionally biased toward acidic residues.

Belongs to the GeBP family.

This chain is Probable transcription factor At1g55950, found in Arabidopsis thaliana (Mouse-ear cress).